The primary structure comprises 477 residues: Ribulose bisphosphate carboxylase large chain (477 aa).

Residues 1–2 (MS) constitute a propeptide that is removed on maturation. Residue Pro-3 is modified to N-acetylproline. Lys-14 carries the N6,N6,N6-trimethyllysine modification. Residues Asn-123 and Thr-173 each contribute to the substrate site. The Proton acceptor role is filled by Lys-175. Position 177 (Lys-177) interacts with substrate. Mg(2+) is bound by residues Lys-201, Asp-203, and Glu-204. Position 201 is an N6-carboxylysine (Lys-201). The active-site Proton acceptor is His-294. 3 residues coordinate substrate: Arg-295, His-327, and Ser-379.

It belongs to the RuBisCO large chain family. Type I subfamily. In terms of assembly, heterohexadecamer of 8 large chains and 8 small chains; disulfide-linked. The disulfide link is formed within the large subunit homodimers. It depends on Mg(2+) as a cofactor. In terms of processing, the disulfide bond which can form in the large chain dimeric partners within the hexadecamer appears to be associated with oxidative stress and protein turnover.

The protein resides in the plastid. Its subcellular location is the chloroplast. It catalyses the reaction 2 (2R)-3-phosphoglycerate + 2 H(+) = D-ribulose 1,5-bisphosphate + CO2 + H2O. It carries out the reaction D-ribulose 1,5-bisphosphate + O2 = 2-phosphoglycolate + (2R)-3-phosphoglycerate + 2 H(+). In terms of biological role, ruBisCO catalyzes two reactions: the carboxylation of D-ribulose 1,5-bisphosphate, the primary event in carbon dioxide fixation, as well as the oxidative fragmentation of the pentose substrate in the photorespiration process. Both reactions occur simultaneously and in competition at the same active site. The protein is Ribulose bisphosphate carboxylase large chain of Dioscorea elephantipes (Elephant's foot yam).